The sequence spans 190 residues: Xanthine phosphoribosyltransferase 1 (190 aa).

Xanthine-binding residues include Leu-20 and Asn-27. 129 to 133 (AQGCA) is a binding site for 5-phospho-alpha-D-ribose 1-diphosphate. Lys-157 provides a ligand contact to xanthine.

This sequence belongs to the purine/pyrimidine phosphoribosyltransferase family. Xpt subfamily. In terms of assembly, homodimer.

The protein localises to the cytoplasm. It catalyses the reaction XMP + diphosphate = xanthine + 5-phospho-alpha-D-ribose 1-diphosphate. It participates in purine metabolism; XMP biosynthesis via salvage pathway; XMP from xanthine: step 1/1. Functionally, converts the preformed base xanthine, a product of nucleic acid breakdown, to xanthosine 5'-monophosphate (XMP), so it can be reused for RNA or DNA synthesis. This Clostridium perfringens (strain ATCC 13124 / DSM 756 / JCM 1290 / NCIMB 6125 / NCTC 8237 / Type A) protein is Xanthine phosphoribosyltransferase 1.